The chain runs to 406 residues: Tryptophan synthase beta chain (406 aa).

Lysine 97 carries the post-translational modification N6-(pyridoxal phosphate)lysine.

The protein belongs to the TrpB family. In terms of assembly, tetramer of two alpha and two beta chains. Requires pyridoxal 5'-phosphate as cofactor.

It carries out the reaction (1S,2R)-1-C-(indol-3-yl)glycerol 3-phosphate + L-serine = D-glyceraldehyde 3-phosphate + L-tryptophan + H2O. The protein operates within amino-acid biosynthesis; L-tryptophan biosynthesis; L-tryptophan from chorismate: step 5/5. Its function is as follows. The beta subunit is responsible for the synthesis of L-tryptophan from indole and L-serine. The polypeptide is Tryptophan synthase beta chain (Lacticaseibacillus paracasei (strain ATCC 334 / BCRC 17002 / CCUG 31169 / CIP 107868 / KCTC 3260 / NRRL B-441) (Lactobacillus paracasei)).